Reading from the N-terminus, the 250-residue chain is ATP synthase subunit a (250 aa).

6 helical membrane passes run 27-47 (FTNA…FLTF), 85-105 (FFPL…VGLI), 115-135 (LIVT…YGFV), 141-161 (FLHL…LVVI), 181-201 (MLAG…LASA), and 223-243 (ELLV…IYLN).

Belongs to the ATPase A chain family. F-type ATPases have 2 components, CF(1) - the catalytic core - and CF(0) - the membrane proton channel. CF(1) has five subunits: alpha(3), beta(3), gamma(1), delta(1), epsilon(1). CF(0) has three main subunits: a(1), b(2) and c(9-12). The alpha and beta chains form an alternating ring which encloses part of the gamma chain. CF(1) is attached to CF(0) by a central stalk formed by the gamma and epsilon chains, while a peripheral stalk is formed by the delta and b chains.

The protein localises to the cell inner membrane. Its function is as follows. Key component of the proton channel; it plays a direct role in the translocation of protons across the membrane. The protein is ATP synthase subunit a of Xanthobacter autotrophicus (strain ATCC BAA-1158 / Py2).